A 211-amino-acid polypeptide reads, in one-letter code: Thiamine-phosphate synthase (211 aa).

4-amino-2-methyl-5-(diphosphooxymethyl)pyrimidine is bound by residues 37–41 (QLRIK) and Asn-69. Mg(2+) is bound by residues Asp-70 and Asp-89. Ser-108 lines the 4-amino-2-methyl-5-(diphosphooxymethyl)pyrimidine pocket. 134–136 (TQT) is a 2-[(2R,5Z)-2-carboxy-4-methylthiazol-5(2H)-ylidene]ethyl phosphate binding site. Lys-137 lines the 4-amino-2-methyl-5-(diphosphooxymethyl)pyrimidine pocket. Residues Gly-166 and 186-187 (VS) contribute to the 2-[(2R,5Z)-2-carboxy-4-methylthiazol-5(2H)-ylidene]ethyl phosphate site.

Belongs to the thiamine-phosphate synthase family. Mg(2+) is required as a cofactor.

It carries out the reaction 2-[(2R,5Z)-2-carboxy-4-methylthiazol-5(2H)-ylidene]ethyl phosphate + 4-amino-2-methyl-5-(diphosphooxymethyl)pyrimidine + 2 H(+) = thiamine phosphate + CO2 + diphosphate. The enzyme catalyses 2-(2-carboxy-4-methylthiazol-5-yl)ethyl phosphate + 4-amino-2-methyl-5-(diphosphooxymethyl)pyrimidine + 2 H(+) = thiamine phosphate + CO2 + diphosphate. It catalyses the reaction 4-methyl-5-(2-phosphooxyethyl)-thiazole + 4-amino-2-methyl-5-(diphosphooxymethyl)pyrimidine + H(+) = thiamine phosphate + diphosphate. It participates in cofactor biosynthesis; thiamine diphosphate biosynthesis; thiamine phosphate from 4-amino-2-methyl-5-diphosphomethylpyrimidine and 4-methyl-5-(2-phosphoethyl)-thiazole: step 1/1. Its function is as follows. Condenses 4-methyl-5-(beta-hydroxyethyl)thiazole monophosphate (THZ-P) and 2-methyl-4-amino-5-hydroxymethyl pyrimidine pyrophosphate (HMP-PP) to form thiamine monophosphate (TMP). In Escherichia coli O157:H7, this protein is Thiamine-phosphate synthase.